The primary structure comprises 430 residues: Asparagine--tRNA ligase (430 aa).

This sequence belongs to the class-II aminoacyl-tRNA synthetase family. Homodimer.

The protein resides in the cytoplasm. It catalyses the reaction tRNA(Asn) + L-asparagine + ATP = L-asparaginyl-tRNA(Asn) + AMP + diphosphate + H(+). The protein is Asparagine--tRNA ligase of Staphylococcus aureus (strain MRSA252).